Reading from the N-terminus, the 345-residue chain is Cell division control protein 2 homolog 2 (345 aa).

The disordered stretch occupies residues M1–D44. The Protein kinase domain occupies Y46–F328. ATP is bound by residues V52–V60 and K75. At S56 the chain carries Phosphoserine. At Y57 the chain carries Phosphotyrosine. Residue D168 is the Proton acceptor of the active site.

It belongs to the protein kinase superfamily. CMGC Ser/Thr protein kinase family. CDC2/CDKX subfamily. In terms of assembly, forms a stable but non-covalent complex with a regulatory subunit and with a cyclin.

It carries out the reaction L-seryl-[protein] + ATP = O-phospho-L-seryl-[protein] + ADP + H(+). It catalyses the reaction L-threonyl-[protein] + ATP = O-phospho-L-threonyl-[protein] + ADP + H(+). Its activity is regulated as follows. Phosphorylation at Ser-56 or Tyr-57 inactivates the enzyme. Probably involved in the control of the cell cycle. The protein is Cell division control protein 2 homolog 2 (CRK2) of Trypanosoma brucei brucei.